Reading from the N-terminus, the 5386-residue chain is Nonribosomal peptide synthetase 2 (5386 aa).

Residues 45–435 (HDANAIDFLE…QGLLECLGRV (391 aa)) form an adenylation 1 region. The 74-residue stretch at 544–617 (SPKDPIGHSV…DLIEVCRESK (74 aa)) folds into the Carrier 1 domain. Position 578 is an O-(pantetheine 4'-phosphoryl)serine (S578). Residues 652 to 1059 (LPCTPLQEAM…VDADRHVSAI (408 aa)) form a condensation 1 region. The adenylation 2 stretch occupies residues 1089–1482 (EKWAATDPHR…GRTDDQVKIR (394 aa)). The region spanning 1611 to 1688 (ELLSQWERDV…SLASLKKLQS (78 aa)) is the Carrier 2 domain. S1648 carries the O-(pantetheine 4'-phosphoryl)serine modification. The interval 1731–2141 (ILPCTPLQEA…ALSADTDMFP (411 aa)) is condensation 2. Residues 2166-2551 (FERTALLHPD…GRLDDQVKIR (386 aa)) form an adenylation 3 region. One can recognise a Carrier 3 domain in the interval 2652-2725 (SKTESEVRNI…DLAEHLDQIS (74 aa)). S2686 carries the O-(pantetheine 4'-phosphoryl)serine modification. Residues 2763–3174 (RPCTPLQNGM…HSQIPLAKTD (412 aa)) are condensation 3. Residues 3202 to 3603 (EKTAQEHPQR…GRADDQVKLR (402 aa)) form an adenylation 4 region. The region spanning 3728 to 3805 (EQWSKQEEKL…RLAKSLAANS (78 aa)) is the Carrier 4 domain. An O-(pantetheine 4'-phosphoryl)serine modification is found at S3765. The segment at 3846-4250 (LAPCTPLQQG…LDQAINDPSA (405 aa)) is condensation 4. One can recognise a Carrier 5 domain in the interval 4281 to 4357 (FEWSDNAIAI…KMAQNMSMKN (77 aa)). O-(pantetheine 4'-phosphoryl)serine is present on S4318. Residues 4391–4802 (EEILPLTPLQ…ERAEAPVIDM (412 aa)) are condensation 5. Residues 4821 to 4842 (HTGSGHVESGEDDGQDTPSTET) are disordered. Residues 4840–4913 (TETTNRIRKI…KMAKLADARA (74 aa)) form the Carrier 6 domain. S4874 is subject to O-(pantetheine 4'-phosphoryl)serine. Residues 4952–5257 (QMLPVTAGQL…VQAHLRHLND (306 aa)) are condensation 6.

The protein belongs to the NRP synthetase family.

It functions in the pathway siderophore biosynthesis. Nonribosomal peptide synthetase; part of the gene cluster that mediates the biosynthesis of hydroxamate-containing siderophores that play a critical role in virulence. Cochliobolus heterostrophus produces extracellular coprogen-type siderophores including coprogen, neocoprogen I and neocoprogen II, as well as the intracellular siderophore ferricrocin. The role of extracellular siderophores is to supply iron to the fungus during plant infection, and the intracellular ferricrocin is required for intracellular iron distribution and storage with a crucial role in ascus and ascospore development. SIDA2 catalyzes the conversion of L-ornithine to N(5)-hydroxyornithine, the first step in the biosynthesis of all hydroxamate-containing siderophores. The assembly of extracellular coprogen-type siderophores is then performed by the nonribosomal peptide synthetase (NRPS) NPS6 whereas the intracellular siderophore ferricrocin is assembled by NPS2. The protein is Nonribosomal peptide synthetase 2 of Cochliobolus heterostrophus (strain C4 / ATCC 48331 / race T) (Southern corn leaf blight fungus).